A 4171-amino-acid chain; its full sequence is Cytoplasmic dynein 2 heavy chain 1 (4171 aa).

A stem region spans residues 1 to 1598 (MSSDSKDQRK…VLRQVSSEFE (1598 aa)). 115–122 (GKELTEGN) provides a ligand contact to ATP. Coiled-coil stretches lie at residues 164-203 (ANDY…CDEL), 629-693 (KQLE…KEEE), 829-861 (DLEE…AERL), 927-1048 (EIAE…KEKR), and 1354-1383 (SRQS…LEQK). 4 AAA regions span residues 1599-1823 (YTYE…VLGG), 1883-2100 (EPLG…VRSH), 2184-2432 (VTKE…WVVS), and 2527-2767 (RFAF…PIKY). ATP is bound by residues 1637–1644 (GPAGTGKT), 1921–1928 (GAAGSGKS), 2226–2233 (GTTGCGKQ), and 2565–2572 (GRPGFGRR). The stalk stretch occupies residues 2776–3064 (QLLGYKRLTL…VDLDREQDTI (289 aa)). Coiled coils occupy residues 2790-2877 (ERLK…KEVQ), 2999-3059 (EKIA…DLDR), and 3308-3336 (ELEE…LLLQ). AAA regions lie at residues 3140 to 3367 (ASLE…IITK) and 3575 to 3784 (LMDF…FVEQ).

It belongs to the dynein heavy chain family. As to quaternary structure, the cytoplasmic dynein complex 2 is probably composed by a heavy chain che-3 homodimer and a number of light intermediate chains.

The protein localises to the cell projection. Its subcellular location is the cilium membrane. It localises to the cytoplasm. The protein resides in the cytoskeleton. In terms of biological role, functions as a motor for intraflagellar retrograde transport in chemosensory neurons. Functions in cilia biogenesis. The sequence is that of Cytoplasmic dynein 2 heavy chain 1 from Caenorhabditis elegans.